We begin with the raw amino-acid sequence, 429 residues long: Glutamate-1-semialdehyde 2,1-aminomutase (429 aa).

Lys-265 bears the N6-(pyridoxal phosphate)lysine mark.

It belongs to the class-III pyridoxal-phosphate-dependent aminotransferase family. HemL subfamily. As to quaternary structure, homodimer. Pyridoxal 5'-phosphate serves as cofactor.

Its subcellular location is the cytoplasm. It catalyses the reaction (S)-4-amino-5-oxopentanoate = 5-aminolevulinate. It participates in porphyrin-containing compound metabolism; protoporphyrin-IX biosynthesis; 5-aminolevulinate from L-glutamyl-tRNA(Glu): step 2/2. In Legionella pneumophila (strain Corby), this protein is Glutamate-1-semialdehyde 2,1-aminomutase.